We begin with the raw amino-acid sequence, 443 residues long: Crinkler effector protein 161 (443 aa).

Positions 1–17 are cleaved as a signal peptide; the sequence is MVKLSCVIVGVPGDPFQ. An LQLFLAK domain region spans residues 18–56; it reads VEIDEICELVAGLKDAIKKEKPDSIKCDADKLQLFKAAK. Residues 57–126 are DWL domain; the sequence is EDRTFSASGA…GMESPSISQI (70 aa). The short motif at 127-133 is the HVLVXXP motif element; the sequence is HVLVVLP. The interval 134–439 is effector domain; that stretch reads EDSESEGGTS…RSMPGYCCAN (306 aa). 2 consecutive short sequence motifs (nuclear localization signal) follow at residues 161–170 and 384–393; these read ADKKRKRYWH and HQPLKRLKLS.

Belongs to the Crinkler effector family.

It is found in the secreted. It localises to the host nucleus. In terms of biological role, secreted effector that exhibits strong cell death suppression activity and suppresses cell death induced by a variety of effectors including CRN63, Avh241 and Avr3a. Protects host plants from biotic and abiotic stresses such as salinity and drought by up-regulation of many defense-related genes, including ABC transporters, Cytochrome P450 monooxygenases and receptor-like kinases (RLKs). Also enhances resistance to Phytophtora pathogens. In Phytophthora sojae (strain P6497) (Soybean stem and root rot agent), this protein is Crinkler effector protein 161.